Here is a 472-residue protein sequence, read N- to C-terminus: Argininosuccinate lyase (472 aa).

Belongs to the lyase 1 family. Argininosuccinate lyase subfamily.

It is found in the cytoplasm. The enzyme catalyses 2-(N(omega)-L-arginino)succinate = fumarate + L-arginine. It participates in amino-acid biosynthesis; L-arginine biosynthesis; L-arginine from L-ornithine and carbamoyl phosphate: step 3/3. The sequence is that of Argininosuccinate lyase from Synechococcus sp. (strain CC9902).